Consider the following 127-residue polypeptide: Small ribosomal subunit protein uS11 (127 aa).

This sequence belongs to the universal ribosomal protein uS11 family. As to quaternary structure, part of the 30S ribosomal subunit. Interacts with proteins S7 and S18. Binds to IF-3.

Its function is as follows. Located on the platform of the 30S subunit, it bridges several disparate RNA helices of the 16S rRNA. Forms part of the Shine-Dalgarno cleft in the 70S ribosome. The protein is Small ribosomal subunit protein uS11 of Streptococcus mutans serotype c (strain ATCC 700610 / UA159).